We begin with the raw amino-acid sequence, 341 residues long: HTH-type transcriptional repressor PurR (341 aa).

Residues 2–56 (ATIKDVAKRAGVSTTTVSHVINKTRFVAENTRAAVWAAIKELNYSPSAVARSLKV) enclose the HTH lacI-type domain. The H-T-H motif DNA-binding region spans 4 to 23 (IKDVAKRAGVSTTTVSHVIN). The DNA-binding element occupies 48–56 (SAVARSLKV). Tyrosine 73, arginine 190, threonine 192, phenylalanine 221, and aspartate 275 together coordinate hypoxanthine.

In terms of assembly, homodimer.

It functions in the pathway purine metabolism; purine nucleotide biosynthesis [regulation]. Is the main repressor of the genes involved in the de novo synthesis of purine nucleotides, regulating purB, purC, purEK, purF, purHD, purL, purMN and guaBA expression. PurR is allosterically activated to bind its cognate DNA by binding the purine corepressors, hypoxanthine or guanine, thereby effecting transcription repression. The sequence is that of HTH-type transcriptional repressor PurR from Proteus mirabilis (strain HI4320).